The chain runs to 532 residues: Probable inorganic phosphate transporter 1-9 (532 aa).

At 1 to 22 (MPELSLLSALDAARIQWYHFKA) the chain is on the cytoplasmic side. The chain crosses the membrane as a helical span at residues 23-43 (IIVAGMGLFTDAYDLFCIAPI). Residues 44–62 (MKMISQIYYHKDSIGTALL) are Extracellular-facing. A helical membrane pass occupies residues 63 to 83 (STSYAIALLGTALGQLIFGYL). The Cytoplasmic segment spans residues 84–91 (GDRVGRRK). The chain crosses the membrane as a helical span at residues 92–112 (VYGLSLLIMVFSSFGCGFSVC). Residues 113 to 124 (TTRRSCVMVSLG) lie on the Extracellular side of the membrane. The chain crosses the membrane as a helical span at residues 125–145 (FFRFVLGLGIGGDYPLSATIM). Residues 146 to 154 (SEFANKRTR) are Cytoplasmic-facing. Residues 155–175 (GAFIAAVFSMQGLGILMSSAV) traverse the membrane as a helical segment. Residues 176-207 (TMVVCLAFKNAGEGSSEKTNVAGLETLAPPES) lie on the Extracellular side of the membrane. A helical transmembrane segment spans residues 208–228 (DIAWRLILMIGALPAALTFYW). Residues 229–292 (RMLMPETARY…KLFSRRFLSL (64 aa)) lie on the Cytoplasmic side of the membrane. Residues 293-313 (HGRDLFAASANWFLVDVVFYT) form a helical membrane-spanning segment. The Extracellular portion of the chain corresponds to 314–343 (SNLLLSQIFNFSNKPLNSTNVYDSAFEVAK). A helical membrane pass occupies residues 344–364 (LAAIVAACSTIPGYWFTVYFI). Residues 365-371 (DKIGRVK) are Cytoplasmic-facing. A helical transmembrane segment spans residues 372–392 (IQMMGFFLMAVVYLVAGIPYS). At 393 to 406 (WYWSKHEKTNKGFM) the chain is on the extracellular side. Residues 407-427 (VLYGLIFFFSNFGPNTTTFII) form a helical membrane-spanning segment. The Cytoplasmic portion of the chain corresponds to 428–441 (PAELFPARFRSTCH). The helical transmembrane segment at 442–462 (GISGAAGKFGAIVGTVGFLWA) threads the bilayer. Topologically, residues 463-478 (TRHHEEDGFPDVKRVR) are extracellular. Residues 479 to 499 (IAFLILGGVCIAGMIVTYLFT) form a helical membrane-spanning segment. Over 500-532 (RETMGRSLEENEDEIVSTSAGSSPANELLRRQY) the chain is Cytoplasmic. Residues 509-532 (ENEDEIVSTSAGSSPANELLRRQY) form a disordered region. Residues 515-524 (VSTSAGSSPA) show a composition bias toward polar residues.

It belongs to the major facilitator superfamily. Phosphate:H(+) symporter (TC 2.A.1.9) family.

Its subcellular location is the membrane. High-affinity transporter for external inorganic phosphate. This chain is Probable inorganic phosphate transporter 1-9 (PHT1-9), found in Arabidopsis thaliana (Mouse-ear cress).